The chain runs to 658 residues: Ubiquilin-3 (658 aa).

Positions 22 to 96 (IRVTVKTPKD…VHLVIKMQRR (75 aa)) constitute a Ubiquitin-like domain. Residues 194–233 (NPHMQHLIQQNPEIGHILNNPEIMRQTMEFLRNPSMMQEM) form the STI1 domain. Over residues 280–291 (TATTASTTTTSS) the composition is skewed to low complexity. Disordered regions lie at residues 280–336 (TATT…RNRL) and 362–478 (YLQG…PESP). The segment covering 312 to 323 (VSGGRQGRGGRQ) has biased composition (gly residues). 3 stretches are compositionally biased toward polar residues: residues 362–379 (YLQG…SPLS), 389–400 (SSPKSGSGQSLP), and 438–469 (TGPS…SLMS). The 45-residue stretch at 614–658 (QLEAHFRVQLEQLRAMGFLNLEANLQALIATEGDVDAAVEKLRKS) folds into the UBA domain.

In terms of tissue distribution, testis-specific (at protein level).

This is Ubiquilin-3 (Ubqln3) from Mus musculus (Mouse).